Reading from the N-terminus, the 1265-residue chain is 1-phosphatidylinositol 4,5-bisphosphate phosphodiesterase gamma-2 (1265 aa).

The PH domain occupies arginine 20 to glutamine 131. The PI-PLC X-box domain maps to glutamine 312–lysine 456. Residues histidine 327 and histidine 372 contribute to the active site. SH2 domains follow at residues tryptophan 532–valine 635 and tryptophan 646–valine 735. A phosphotyrosine; by BTK mark is found at tyrosine 753 and tyrosine 759. Positions methionine 769 to threonine 829 constitute an SH3 domain. In terms of domain architecture, PI-PLC Y-box spans leucine 930–arginine 1044. The C2 domain occupies leucine 1038–asparagine 1169. Phosphotyrosine; by BTK is present on tyrosine 1197. 2 positions are modified to phosphotyrosine: tyrosine 1217 and tyrosine 1245.

As to quaternary structure, part of a complex composed of EEIG1, TNFRSF11A/RANK, PLCG2, GAB2, TEC and BTK; complex formation increases in the presence of TNFSF11/RANKL. Interacts (via SH2 domain) with CSF1R (tyrosine phosphorylated). Interacts constitutively with THEMIS2. The cofactor is Ca(2+). Post-translationally, phosphorylated on tyrosine residues by CSF1R. Phosphorylated on tyrosine residues by BTK and SYK; upon ligand-induced activation of a variety of growth factor receptors and immune system receptors. Phosphorylation leads to increased phospholipase activity.

It is found in the membrane raft. The enzyme catalyses a 1,2-diacyl-sn-glycero-3-phospho-(1D-myo-inositol-4,5-bisphosphate) + H2O = 1D-myo-inositol 1,4,5-trisphosphate + a 1,2-diacyl-sn-glycerol + H(+). In terms of biological role, the production of the second messenger molecules diacylglycerol (DAG) and inositol 1,4,5-trisphosphate (IP3) is mediated by activated phosphatidylinositol-specific phospholipase C enzymes. It is a crucial enzyme in transmembrane signaling. This Homo sapiens (Human) protein is 1-phosphatidylinositol 4,5-bisphosphate phosphodiesterase gamma-2.